Consider the following 213-residue polypeptide: Ribosome maturation factor RimM (213 aa).

Positions 99-175 constitute a PRC barrel domain; sequence DQDAAYISDL…RITMRLPEGL (77 aa). The disordered stretch occupies residues 182-213; sequence TATAREPRARRTRKRGLRKPITGADATPPDSQ. The span at 189 to 199 shows a compositional bias: basic residues; it reads RARRTRKRGLR.

The protein belongs to the RimM family. In terms of assembly, binds ribosomal protein uS19.

It localises to the cytoplasm. Functionally, an accessory protein needed during the final step in the assembly of 30S ribosomal subunit, possibly for assembly of the head region. Essential for efficient processing of 16S rRNA. May be needed both before and after RbfA during the maturation of 16S rRNA. It has affinity for free ribosomal 30S subunits but not for 70S ribosomes. This Acidobacterium capsulatum (strain ATCC 51196 / DSM 11244 / BCRC 80197 / JCM 7670 / NBRC 15755 / NCIMB 13165 / 161) protein is Ribosome maturation factor RimM.